The following is a 115-amino-acid chain: Alpha-endosulfine (115 aa).

The segment covering 1 to 10 (MSSENLSDTQ) has biased composition (polar residues). The segment at 1 to 27 (MSSENLSDTQMEYEDEKQDSQEKNANL) is disordered. At serine 65 the chain carries Phosphoserine; by GWL. Positions 77–115 (NKQLPVAGPDKNLVTGDHIPTPQDLPQRRSSLVTSKLAG) are disordered. Residues 104–115 (RRSSLVTSKLAG) show a composition bias toward polar residues.

It belongs to the endosulfine family. In terms of processing, phosphorylation at Ser-65 by gwl during mitosis is essential for interaction with ppp2r2d (PR55-delta) and subsequent inactivation of PP2A.

Its subcellular location is the cytoplasm. In terms of biological role, protein phosphatase inhibitor that specifically inhibits protein phosphatase 2A (PP2A) during mitosis. When phosphorylated at Ser-67 during mitosis, specifically interacts with ppp2r2d (PR55-delta) and inhibits its activity, leading to inactivation of PP2A, an essential condition to keep cyclin-B1-CDK1 activity high during M phase. The protein is Alpha-endosulfine (ensa) of Salmo salar (Atlantic salmon).